Here is a 740-residue protein sequence, read N- to C-terminus: Anaphase-promoting complex subunit 5 (740 aa).

Ser-180 bears the Phosphoserine mark. TPR repeat units follow at residues 194–234 (QKQA…FNPD), 235–285 (FAEA…GRSL), 286–322 (RYAA…SNDH), 323–363 (VCLQ…YLAS), 364–403 (LGIQ…SELI), 404–451 (DISI…TESF), 452–485 (AVAL…FPPN), 486–525 (SQHA…ALNG), 526–565 (IEGV…TEMV), 566–605 (ISVL…QYLA), 606–645 (SETV…VLDK), 646–681 (GRAM…NLSE), and 682–721 (AKNY…CAMI). Thr-217 is modified (phosphothreonine).

It belongs to the APC5 family. In terms of assembly, the mammalian APC/C is composed at least of 14 distinct subunits ANAPC1, ANAPC2, CDC27/APC3, ANAPC4, ANAPC5, CDC16/APC6, ANAPC7, CDC23/APC8, ANAPC10, ANAPC11, CDC26/APC12, ANAPC13, ANAPC15 and ANAPC16 that assemble into a complex of at least 19 chains with a combined molecular mass of around 1.2 MDa; APC/C interacts with FZR1 and FBXO5.

The protein localises to the nucleus. The protein resides in the cytoplasm. It localises to the cytoskeleton. It is found in the spindle. The protein operates within protein modification; protein ubiquitination. In terms of biological role, component of the anaphase promoting complex/cyclosome (APC/C), a cell cycle-regulated E3 ubiquitin ligase that controls progression through mitosis and the G1 phase of the cell cycle. The APC/C complex acts by mediating ubiquitination and subsequent degradation of target proteins: it mainly mediates the formation of 'Lys-11'-linked polyubiquitin chains and, to a lower extent, the formation of 'Lys-48'- and 'Lys-63'-linked polyubiquitin chains. The APC/C complex catalyzes assembly of branched 'Lys-11'-/'Lys-48'-linked branched ubiquitin chains on target proteins. This Mus musculus (Mouse) protein is Anaphase-promoting complex subunit 5 (Anapc5).